Consider the following 315-residue polypeptide: Acetaldehyde dehydrogenase 2 (315 aa).

13–16 is a binding site for NAD(+); sequence SGNI. C131 (acyl-thioester intermediate) is an active-site residue. NAD(+)-binding positions include 162–170 and N290; that span reads SAGPGTRAN.

The protein belongs to the acetaldehyde dehydrogenase family.

The catalysed reaction is acetaldehyde + NAD(+) + CoA = acetyl-CoA + NADH + H(+). This Pseudomonas putida (strain W619) protein is Acetaldehyde dehydrogenase 2.